The following is a 23-amino-acid chain: Phallacidin proprotein (23 aa).

A propeptide is located at residue proline 1. Positions alanine 2 to proline 8 form a cross-link, cyclopeptide (Ala-Pro). The segment at residues tryptophan 3 to cysteine 7 is a cross-link (2'-cysteinyl-6'-hydroxytryptophan sulfoxide (Trp-Cys)). Positions cysteine 9 to lysine 23 are excised as a propeptide.

The protein belongs to the MSDIN fungal toxin family. Post-translationally, processed by the macrocyclase-peptidase enzyme POPB to yield a toxic cyclic heptapeptide. POPB first removes 10 residues from the N-terminus. Conformational trapping of the remaining peptide forces the enzyme to release this intermediate rather than proceed to macrocyclization. The enzyme rebinds the remaining peptide in a different conformation and catalyzes macrocyclization of the N-terminal 7 residues.

Its function is as follows. Major toxin that belongs to the bicyclic heptapeptides called phallotoxins. Although structurally related to amatoxins, phallotoxins have a different mode of action, which is the stabilization of F-actin. Phallotoxins are poisonous when administered parenterally, but not orally because of poor absorption. In Amanita fuligineoides, this protein is Phallacidin proprotein.